A 507-amino-acid polypeptide reads, in one-letter code: ATP synthase subunit alpha, chloroplastic (507 aa).

170–177 (GDRQTGKT) contributes to the ATP binding site.

It belongs to the ATPase alpha/beta chains family. F-type ATPases have 2 components, CF(1) - the catalytic core - and CF(0) - the membrane proton channel. CF(1) has five subunits: alpha(3), beta(3), gamma(1), delta(1), epsilon(1). CF(0) has four main subunits: a, b, b' and c.

It is found in the plastid. The protein localises to the chloroplast thylakoid membrane. The catalysed reaction is ATP + H2O + 4 H(+)(in) = ADP + phosphate + 5 H(+)(out). Functionally, produces ATP from ADP in the presence of a proton gradient across the membrane. The alpha chain is a regulatory subunit. This chain is ATP synthase subunit alpha, chloroplastic, found in Nicotiana tabacum (Common tobacco).